Consider the following 246-residue polypeptide: Biosynthetic peptidoglycan transglycosylase (246 aa).

Residues 28–48 (FALFLVLFLSSVVLFRFVPVP) form a helical membrane-spanning segment.

The protein belongs to the glycosyltransferase 51 family.

It is found in the cell inner membrane. It carries out the reaction [GlcNAc-(1-&gt;4)-Mur2Ac(oyl-L-Ala-gamma-D-Glu-L-Lys-D-Ala-D-Ala)](n)-di-trans,octa-cis-undecaprenyl diphosphate + beta-D-GlcNAc-(1-&gt;4)-Mur2Ac(oyl-L-Ala-gamma-D-Glu-L-Lys-D-Ala-D-Ala)-di-trans,octa-cis-undecaprenyl diphosphate = [GlcNAc-(1-&gt;4)-Mur2Ac(oyl-L-Ala-gamma-D-Glu-L-Lys-D-Ala-D-Ala)](n+1)-di-trans,octa-cis-undecaprenyl diphosphate + di-trans,octa-cis-undecaprenyl diphosphate + H(+). The protein operates within cell wall biogenesis; peptidoglycan biosynthesis. Functionally, peptidoglycan polymerase that catalyzes glycan chain elongation from lipid-linked precursors. This Pasteurella multocida (strain Pm70) protein is Biosynthetic peptidoglycan transglycosylase.